A 182-amino-acid polypeptide reads, in one-letter code: NADH-quinone oxidoreductase subunit B 2 (182 aa).

[4Fe-4S] cluster contacts are provided by Cys-47, Cys-48, Cys-113, and Cys-142.

It belongs to the complex I 20 kDa subunit family. NDH-1 is composed of 14 different subunits. Subunits NuoB, C, D, E, F, and G constitute the peripheral sector of the complex. Requires [4Fe-4S] cluster as cofactor.

The protein resides in the cell inner membrane. It carries out the reaction a quinone + NADH + 5 H(+)(in) = a quinol + NAD(+) + 4 H(+)(out). In terms of biological role, NDH-1 shuttles electrons from NADH, via FMN and iron-sulfur (Fe-S) centers, to quinones in the respiratory chain. The immediate electron acceptor for the enzyme in this species is believed to be ubiquinone. Couples the redox reaction to proton translocation (for every two electrons transferred, four hydrogen ions are translocated across the cytoplasmic membrane), and thus conserves the redox energy in a proton gradient. This Anaeromyxobacter sp. (strain K) protein is NADH-quinone oxidoreductase subunit B 2.